The primary structure comprises 725 residues: N-alpha-acetyltransferase 35, NatC auxiliary subunit (725 aa).

The disordered stretch occupies residues 548–573; it reads ERIMEEQQKGRSSKKTKKKKKVRPLS. Residues 558–571 show a composition bias toward basic residues; sequence RSSKKTKKKKKVRP.

Belongs to the MAK10 family. In terms of assembly, component of the N-terminal acetyltransferase C (NatC) complex.

The protein localises to the cytoplasm. Auxillary component of the N-terminal acetyltransferase C (NatC) complex which catalyzes acetylation of N-terminal methionine residues. N-terminal acetylation protects proteins from ubiquitination and degradation by the N-end rule pathway. This chain is N-alpha-acetyltransferase 35, NatC auxiliary subunit (NAA35), found in Gallus gallus (Chicken).